The following is a 2571-amino-acid chain: Highly reducing polyketide synthase 19 (2571 aa).

Positions 1 to 51 (MSPIFLGDSEDAATCRCGPPSSPSPELSGTETALTSDSDGPELLNPGPQGP) are disordered. Positions 27-38 (LSGTETALTSDS) are enriched in polar residues. The region spanning 51–485 (PEPIAIIGMG…GANAHCILES (435 aa)) is the Ketosynthase family 3 (KS3) domain. Catalysis depends on for beta-ketoacyl synthase activity residues C224, H359, and H398. Residues 609 to 932 (VFTGQGAQWA…PYNSALLRGK (324 aa)) form a malonyl-CoA:ACP transacylase (MAT) domain region. Catalysis depends on S701, which acts as the For malonyltransferase activity. Positions 1019 to 1163 (HDLLGSRVPG…GLVKLTQNED (145 aa)) are N-terminal hotdog fold. The dehydratase (DH) domain stretch occupies residues 1019 to 1340 (HDLLGSRVPG…SGCRMVPYSS (322 aa)). The PKS/mFAS DH domain occupies 1019 to 1344 (HDLLGSRVPG…MVPYSSGTAV (326 aa)). H1051 serves as the catalytic Proton acceptor; for dehydratase activity. The C-terminal hotdog fold stretch occupies residues 1177–1344 (MEQSAPRTWY…MVPYSSGTAV (168 aa)). D1241 (proton donor; for dehydratase activity) is an active-site residue. Residues 1800 to 2140 (NMSDAFVFTR…AFRALSGSTT (341 aa)) are enoyl reductase (ER) domain. A ketoreductase (KR) domain region spans residues 2177-2355 (SYLLVGCLGG…ATSVGLGMIS (179 aa)). In terms of domain architecture, Carrier spans 2490 to 2568 (AVAAQALELV…MLSELIAGKL (79 aa)). S2527 is modified (O-(pantetheine 4'-phosphoryl)serine).

It functions in the pathway polyketide biosynthesis. Its function is as follows. Highly reducing polyketide synthase; part of the gene cluster that mediates the biosynthesis of pyriculol and pyriculariol, two heptaketides that induce lesion formation upon application on rice leaves but are dispensable for pathogenicity. The highly reducing polyketide synthase synthesizes the heptaketide backbone of pyriculol and pyriculariol. Pyriculol and pyriculariol contain several hydroxyl moieties and double bonds, so it can be assumed that several reduction steps occur during biosynthesis. These reactions could be executed by PKS19 itself or partly by the tailoring enzymes OXR1, PXR2, RED1, RED2 or RED3, identified within the cluster. The FAD-linked oxidoreductase OXR1 is the only tailoring enzyme for which the function has been determined yet, and is involved in the oxidation of dihydropyriculol and dihydropyriculariol into pyriculol and pyriculariol, respectively. This Pyricularia oryzae (strain 70-15 / ATCC MYA-4617 / FGSC 8958) (Rice blast fungus) protein is Highly reducing polyketide synthase 19.